The sequence spans 208 residues: Large ribosomal subunit protein uL4 (208 aa).

The tract at residues 45-89 (RQGTHAHKNRSAVSGGGKKPWRQKGTGRARQGSTRSPQWRGGGTV) is disordered.

Belongs to the universal ribosomal protein uL4 family. As to quaternary structure, part of the 50S ribosomal subunit.

In terms of biological role, one of the primary rRNA binding proteins, this protein initially binds near the 5'-end of the 23S rRNA. It is important during the early stages of 50S assembly. It makes multiple contacts with different domains of the 23S rRNA in the assembled 50S subunit and ribosome. Forms part of the polypeptide exit tunnel. The protein is Large ribosomal subunit protein uL4 of Lactococcus lactis subsp. cremoris (strain SK11).